Consider the following 148-residue polypeptide: Photosystem II extrinsic protein U, chloroplastic (148 aa).

Residues 1–32 constitute a chloroplast transit peptide; that stretch reads MKLAVFAVLISTVAAFVAPNGVQRAATTELNA. A thylakoid-targeting transit peptide spans 33 to 54; sequence ERREFLSAAAVAAGLAFPLTAN.

This sequence belongs to the PsbU family. In terms of assembly, PSII is composed of 1 copy each of membrane proteins PsbA, PsbB, PsbC, PsbD, PsbE, PsbF, PsbH, PsbI, PsbJ, PsbK, PsbL, PsbM, PsbT, PsbX, PsbY, PsbZ, Psb30/Ycf12, at least 3 peripheral proteins of the oxygen-evolving complex and a large number of cofactors. It forms dimeric complexes. The oxygen-evolving complex may be composed of PsbO, PsbQ', PsbV and PsbU.

It localises to the plastid. The protein resides in the chloroplast thylakoid membrane. Its function is as follows. One of the extrinsic, lumenal subunits of photosystem II (PSII), which stabilize and protect the oxygen-evolving complex. PSII is a light-driven water plastoquinone oxidoreductase, using light energy to abstract electrons from H(2)O, generating a proton gradient subsequently used for ATP formation. Stabilizes the structure of photosystem II oxygen-evolving complex (OEC), the ion environment of oxygen evolution and protects the OEC against heat-induced inactivation. This Phaeodactylum tricornutum (Diatom) protein is Photosystem II extrinsic protein U, chloroplastic.